Reading from the N-terminus, the 179-residue chain is Large ribosomal subunit protein uL6 (179 aa).

Belongs to the universal ribosomal protein uL6 family. In terms of assembly, part of the 50S ribosomal subunit.

This protein binds to the 23S rRNA, and is important in its secondary structure. It is located near the subunit interface in the base of the L7/L12 stalk, and near the tRNA binding site of the peptidyltransferase center. The chain is Large ribosomal subunit protein uL6 from Spiroplasma citri.